Here is a 207-residue protein sequence, read N- to C-terminus: Small ribosomal subunit protein uS4 (207 aa).

The interval Lys-31–Gln-55 is disordered. Polar residues predominate over residues Gly-42 to Gly-53. Residues Ser-97 to Leu-160 form the S4 RNA-binding domain.

This sequence belongs to the universal ribosomal protein uS4 family. As to quaternary structure, part of the 30S ribosomal subunit. Contacts protein S5. The interaction surface between S4 and S5 is involved in control of translational fidelity.

Its function is as follows. One of the primary rRNA binding proteins, it binds directly to 16S rRNA where it nucleates assembly of the body of the 30S subunit. In terms of biological role, with S5 and S12 plays an important role in translational accuracy. This chain is Small ribosomal subunit protein uS4, found in Paraburkholderia phymatum (strain DSM 17167 / CIP 108236 / LMG 21445 / STM815) (Burkholderia phymatum).